Consider the following 396-residue polypeptide: Elongation factor Tu (396 aa).

In terms of domain architecture, tr-type G spans 10–205 (KPHVNIGTIG…AVDSYIPTPE (196 aa)). A G1 region spans residues 19-26 (GHVDHGKT). A GTP-binding site is contributed by 19–26 (GHVDHGKT). Thr26 provides a ligand contact to Mg(2+). Residues 60-64 (GITIN) form a G2 region. The segment at 81-84 (DCPG) is G3. GTP is bound by residues 81–85 (DCPGH) and 136–139 (NKCD). The segment at 136 to 139 (NKCD) is G4. A G5 region spans residues 174 to 176 (SAK).

This sequence belongs to the TRAFAC class translation factor GTPase superfamily. Classic translation factor GTPase family. EF-Tu/EF-1A subfamily. In terms of assembly, monomer.

Its subcellular location is the cytoplasm. It carries out the reaction GTP + H2O = GDP + phosphate + H(+). Its function is as follows. GTP hydrolase that promotes the GTP-dependent binding of aminoacyl-tRNA to the A-site of ribosomes during protein biosynthesis. In Brevibacillus brevis (strain 47 / JCM 6285 / NBRC 100599), this protein is Elongation factor Tu.